A 207-amino-acid polypeptide reads, in one-letter code: Holliday junction branch migration complex subunit RuvA (207 aa).

Positions 1–71 (MIVSIAGKLV…RLTPRLIGFS (71 aa)) are domain I. Residues 72–149 (TLPERQFFDL…RFALMVAGGE (78 aa)) are domain II. Positions 150–155 (VADAME) are flexible linker. Residues 156–207 (VESPIVSDTYDALVTLGHSESDARKLIDETLATGKKFKDTESLLTAIYQRSK) form a domain III region.

The protein belongs to the RuvA family. In terms of assembly, homotetramer. Forms an RuvA(8)-RuvB(12)-Holliday junction (HJ) complex. HJ DNA is sandwiched between 2 RuvA tetramers; dsDNA enters through RuvA and exits via RuvB. An RuvB hexamer assembles on each DNA strand where it exits the tetramer. Each RuvB hexamer is contacted by two RuvA subunits (via domain III) on 2 adjacent RuvB subunits; this complex drives branch migration. In the full resolvosome a probable DNA-RuvA(4)-RuvB(12)-RuvC(2) complex forms which resolves the HJ.

The protein resides in the cytoplasm. Its function is as follows. The RuvA-RuvB-RuvC complex processes Holliday junction (HJ) DNA during genetic recombination and DNA repair, while the RuvA-RuvB complex plays an important role in the rescue of blocked DNA replication forks via replication fork reversal (RFR). RuvA specifically binds to HJ cruciform DNA, conferring on it an open structure. The RuvB hexamer acts as an ATP-dependent pump, pulling dsDNA into and through the RuvAB complex. HJ branch migration allows RuvC to scan DNA until it finds its consensus sequence, where it cleaves and resolves the cruciform DNA. The protein is Holliday junction branch migration complex subunit RuvA of Rhodopirellula baltica (strain DSM 10527 / NCIMB 13988 / SH1).